The sequence spans 504 residues: Glycine--tRNA ligase (504 aa).

The substrate site is built by R99 and E189. Residues R221–E223, F231–L236, E306–I307, and G365–R368 each bind ATP. A substrate-binding site is contributed by L236–E240. E361–G365 is a binding site for substrate.

The protein belongs to the class-II aminoacyl-tRNA synthetase family. Homodimer.

Its subcellular location is the cytoplasm. The enzyme catalyses tRNA(Gly) + glycine + ATP = glycyl-tRNA(Gly) + AMP + diphosphate. Its function is as follows. Catalyzes the attachment of glycine to tRNA(Gly). This is Glycine--tRNA ligase from Deinococcus geothermalis (strain DSM 11300 / CIP 105573 / AG-3a).